A 77-amino-acid polypeptide reads, in one-letter code: Conotoxin VnMEKL-0111 (77 aa).

A signal peptide spans 1–19; it reads MEKLTILLLVAAVLMSTQA. Positions 20-46 are excised as a propeptide; the sequence is LIQHDGEKSQKAKMKFLTARTLSAKTR. Cystine bridges form between Cys50–Cys66, Cys57–Cys71, and Cys65–Cys75.

Belongs to the conotoxin O2 superfamily. Expressed by the venom duct.

Its subcellular location is the secreted. This chain is Conotoxin VnMEKL-0111, found in Conus ventricosus (Mediterranean cone).